The sequence spans 280 residues: Endochitinase A (280 aa).

An N-terminal signal peptide occupies residues 1–25; that stretch reads MANAPRILALGLLALLCAAAGPAAA. Residues 26–60 form the Chitin-binding type-1 domain; it reads QNCGCQPNFCCSKFGYCGTTDAYCGDGCQSGPCRS. 4 disulfide bridges follow: Cys28–Cys36, Cys30–Cys42, Cys35–Cys49, and Cys53–Cys58. Residues 61–77 are hinge region (poly-Gly); the sequence is GGGGGGGGGGGGGGSGG. The catalytic stretch occupies residues 78 to 280; the sequence is ANVANVVTDA…RVDPGPNLTC (203 aa). Cys100 and Cys149 are disulfide-bonded. Catalysis depends on Glu144, which acts as the Proton donor. N-linked (GlcNAc...) asparagine glycosylation is present at Asn155. Intrachain disulfides connect Cys161/Cys170 and Cys248/Cys280. The N-linked (GlcNAc...) asparagine glycan is linked to Asn277.

The protein belongs to the glycosyl hydrolase 19 family. Chitinase class IV subfamily.

It is found in the secreted. The enzyme catalyses Random endo-hydrolysis of N-acetyl-beta-D-glucosaminide (1-&gt;4)-beta-linkages in chitin and chitodextrins.. With respect to regulation, inactivated by l-ethyl-3-(3-dimethylaminopropyl)carbodiimide (EDC) in the absence of exogenous nucleophiles (e.g. GlcNAc4, GlcNAc3 and GlcNAc2). Not inhibited by tetra-N-acetylchitopentaose or modified chitotetraose substrate TMG-chitotriomycin-pMP, containing a free, non-acetylated glucosaminyl residue or a N-trimethylamino glucosamine (TMG) residue at the non-reducing terminus, respectively. Defense against chitin-containing fungal pathogens. Hydrolyzes glycol chitin and tetra-N-acetylchitotetraose in vitro. Its action is countered by fungal polyglycine hydrolases and fungalysin, that cleave the chitin-binding domain from the protein. The polypeptide is Endochitinase A (Zea mays (Maize)).